The chain runs to 224 residues: Uridylate kinase (224 aa).

6-10 (KVTGK) is a binding site for ATP. Glycine 41 lines the UMP pocket. Residues glycine 42 and arginine 46 each contribute to the ATP site. UMP-binding positions include aspartate 63 and 111-117 (FQPGQST). ATP contacts are provided by threonine 137, phenylalanine 143, and aspartate 146.

The protein belongs to the UMP kinase family. In terms of assembly, homohexamer.

The protein localises to the cytoplasm. The catalysed reaction is UMP + ATP = UDP + ADP. It participates in pyrimidine metabolism; CTP biosynthesis via de novo pathway; UDP from UMP (UMPK route): step 1/1. Inhibited by UTP. In terms of biological role, catalyzes the reversible phosphorylation of UMP to UDP. This Metallosphaera sedula (strain ATCC 51363 / DSM 5348 / JCM 9185 / NBRC 15509 / TH2) protein is Uridylate kinase.